Here is a 75-residue protein sequence, read N- to C-terminus: Small ribosomal subunit protein bS18c (75 aa).

It belongs to the bacterial ribosomal protein bS18 family. Part of the 30S ribosomal subunit.

Its subcellular location is the plastid. The protein resides in the chloroplast. The sequence is that of Small ribosomal subunit protein bS18c (rps18) from Anthoceros angustus (Hornwort).